The primary structure comprises 680 residues: SH3 domain-binding protein 1 (680 aa).

Positions 1 to 11 (MMKRQLHRMRQ) are enriched in basic residues. Disordered regions lie at residues 1–24 (MMKR…TPET) and 160–184 (SQAA…HTTT). The segment at 1 to 275 (MMKRQLHRMR…TAAPFSRVYG (275 aa)) is interaction with CGNL1. Residues 81-262 (MAESFKELDP…RDNHSQADHS (182 aa)) enclose the BAR domain. The span at 160–169 (SQAAKNSGSN) shows a compositional bias: polar residues. 2 positions are modified to phosphoserine: serine 241 and serine 262. Residues 276–469 (VSLRTHLQDL…ALIQNADTLF (194 aa)) enclose the Rho-GAP domain. Positions 470 to 680 (PGDINFNVSG…RPRGLISETE (211 aa)) are interaction with CD2AP. Positions 488–680 (EKVSSQQVSE…RPRGLISETE (193 aa)) are disordered. The segment covering 502 to 516 (VTVPAPATTPAPTPA) has biased composition (pro residues). Serine 535 carries the post-translational modification Phosphoserine. Polar residues predominate over residues 536-546 (PKVSRNPTETA). Residues 561 to 571 (PARPTMPPPQP) are compositionally biased toward pro residues. A Phosphoserine modification is found at serine 582. A Phosphothreonine modification is found at threonine 592. The SH3-binding motif lies at 607–616 (APTMPPPLPP). A compositionally biased stretch (pro residues) spans 609 to 621 (TMPPPLPPVPPQP). Serine 632 carries the post-translational modification Phosphoserine. A compositionally biased stretch (pro residues) spans 660–671 (HPPPPALPPQPR).

In terms of assembly, interacts with RAC1. Interacts with the exocyst via EXOC4 and EXOC8; required for the localization of both SH3BP1 and the exocyst to the leading edge of migrating cells. Interacts with CD2AP and CGNL1; probably part of a complex at cell junctions. Interacts with CAPZA1; recruits CAPZA1 to forming cell junctions. May interact with AFDN. Interacts with PLXND1; they dissociate upon SEMA3E binding to PLXND1 allowing SH3BP1 to transduce downstream signal through RAC1 inactivation. Interacts with ABL1, GRB2 and SRC (via SH3 domain). Expressed in all tissues examined. Highest levels found in spleen and brain, lowest in heart and liver.

Its subcellular location is the cell projection. It localises to the cell junction. The protein resides in the tight junction. The protein localises to the adherens junction. It is found in the phagocytic cup. Its subcellular location is the nucleus. It localises to the cytoplasm. The protein resides in the cytosol. In terms of biological role, GTPase activating protein (GAP) which specifically converts GTP-bound Rho-type GTPases including RAC1 and CDC42 in their inactive GDP-bound form. By specifically inactivating RAC1 at the leading edge of migrating cells, it regulates the spatiotemporal organization of cell protrusions which is important for proper cell migration. Also negatively regulates CDC42 in the process of actin remodeling and the formation of epithelial cell junctions. Through its GAP activity toward RAC1 and/or CDC42 plays a specific role in phagocytosis of large particles. Specifically recruited by a PI3 kinase/PI3K-dependent mechanism to sites of large particles engagement, inactivates RAC1 and/or CDC42 allowing the reorganization of the underlying actin cytoskeleton required for engulfment. It also plays a role in angiogenesis and the process of repulsive guidance as part of a semaphorin-plexin signaling pathway. Following the binding of PLXND1 to extracellular SEMA3E it dissociates from PLXND1 and inactivates RAC1, inducing the intracellular reorganization of the actin cytoskeleton and the collapse of cells. This is SH3 domain-binding protein 1 from Mus musculus (Mouse).